The sequence spans 974 residues: ATP-dependent RNA helicase DBP7 (974 aa).

Positions 1 to 135 (MDDNDDGLML…SSAASSSRKA (135 aa)) are disordered. The segment covering 13–24 (AAPAAGSASVSS) has biased composition (low complexity). Residues 25–48 (KRSKQTAKARFAQKRTAHQLRKQA) show a composition bias toward basic residues. Low complexity-rich tracts occupy residues 67 to 85 (PASA…SPAA), 92 to 102 (ATSTSSAALSA), and 118 to 133 (TSRS…SSSR). The Q motif signature appears at 200-230 (SDFASCGLDPLLVYHLASKMNIGSNPTAIQK). In terms of domain architecture, Helicase ATP-binding spans 236–477 (LLHPGLDRDI…GKTLVNPKII (242 aa)). Residue 249 to 256 (AQTGSGKT) participates in ATP binding. Residues 381–384 (DEAD) carry the DEAD box motif. Residues 531 to 747 (LLRSYISRAR…TRKITPASIE (217 aa)) form the Helicase C-terminal domain. The interval 836–887 (KSSAIGASSTPASSHETTNKKRMRIAPDTAESDSSSDSSDDAGSDYESHSNK) is disordered. Positions 840-851 (IGASSTPASSHE) are enriched in polar residues.

Belongs to the DEAD box helicase family. DDX31/DBP7 subfamily.

It is found in the nucleus. It localises to the nucleolus. The enzyme catalyses ATP + H2O = ADP + phosphate + H(+). Functionally, ATP-binding RNA helicase involved in the biogenesis of 60S ribosomal subunits and is required for the normal formation of 25S and 5.8S rRNAs. This chain is ATP-dependent RNA helicase DBP7 (DBP7), found in Mycosarcoma maydis (Corn smut fungus).